Consider the following 506-residue polypeptide: DEAD-box ATP-dependent RNA helicase CshA (506 aa).

The short motif at 2-30 (QNFKELGISDNTVQSLESMGFKEPTPIQK) is the Q motif element. The region spanning 33–203 (IPYALQGIDI…QQFMKSPKII (171 aa)) is the Helicase ATP-binding domain. Position 46–53 (46–53 (AQTGTGKT)) interacts with ATP. The short motif at 150-153 (DEAD) is the DEAD box element. One can recognise a Helicase C-terminal domain in the interval 214–375 (QIEEFYTIVK…LRPPHRKEVL (162 aa)). The interval 436 to 506 (EKPLSRKGRN…KGRTFADHQK (71 aa)) is disordered. Basic residues predominate over residues 468-480 (KRSKGYSSKKKST).

This sequence belongs to the DEAD box helicase family. CshA subfamily. As to quaternary structure, oligomerizes, may be a member of the RNA degradosome.

It is found in the cytoplasm. The enzyme catalyses ATP + H2O = ADP + phosphate + H(+). Its function is as follows. DEAD-box RNA helicase possibly involved in RNA degradation. Unwinds dsRNA in both 5'- and 3'-directions, has RNA-dependent ATPase activity. The chain is DEAD-box ATP-dependent RNA helicase CshA from Staphylococcus aureus (strain bovine RF122 / ET3-1).